Consider the following 155-residue polypeptide: Large ribosomal subunit protein uL11 (155 aa).

The protein belongs to the universal ribosomal protein uL11 family. In terms of assembly, part of the ribosomal stalk of the 50S ribosomal subunit. Interacts with L10 and the large rRNA to form the base of the stalk. L10 forms an elongated spine to which L12 dimers bind in a sequential fashion forming a multimeric L10(L12)X complex.

In terms of biological role, forms part of the ribosomal stalk which helps the ribosome interact with GTP-bound translation factors. This is Large ribosomal subunit protein uL11 from Picrophilus torridus (strain ATCC 700027 / DSM 9790 / JCM 10055 / NBRC 100828 / KAW 2/3).